A 210-amino-acid polypeptide reads, in one-letter code: Fimbriae Z protein (210 aa).

In terms of domain architecture, Response regulatory spans 5 to 121 (SVIIMDTHPI…DIFHAVQMIL (117 aa)). Position 56 is a 4-aspartylphosphate (Asp56). Residues 143 to 208 (NSSTVTVLSN…ELIDYAKLYE (66 aa)) form the HTH luxR-type domain. The H-T-H motif DNA-binding region spans 167–186 (NKEIADKLLLSNKTVSAHKS).

Its subcellular location is the cytoplasm. This Escherichia coli O157:H7 protein is Fimbriae Z protein (fimZ).